The sequence spans 1073 residues: Carbamoyl phosphate synthase large chain (1073 aa).

Positions 2–403 (PKRTDIKSIL…SLQKALRGLE (402 aa)) are carboxyphosphate synthetic domain. Arg129, Arg169, Gly175, Gly176, Glu208, Leu210, Glu215, Gly241, Ile242, His243, Gln285, and Glu299 together coordinate ATP. Residues 133–328 (DVAMKKIGLE…IAKVAAKLAV (196 aa)) form the ATP-grasp 1 domain. 3 residues coordinate Mg(2+): Gln285, Glu299, and Asn301. Residues Gln285, Glu299, and Asn301 each coordinate Mn(2+). Residues 404-553 (VGATGFDPKV…YSTYEEECEA (150 aa)) form an oligomerization domain region. The segment at 554–936 (NPSTDREKIM…AFAKAQLGSN (383 aa)) is carbamoyl phosphate synthetic domain. In terms of domain architecture, ATP-grasp 2 spans 679–870 (QHAVDRLKLK…LAKVAARVMA (192 aa)). Positions 715, 754, 756, 761, 786, 787, 788, 789, 829, and 841 each coordinate ATP. Mg(2+)-binding residues include Gln829, Glu841, and Asn843. Positions 829, 841, and 843 each coordinate Mn(2+). The MGS-like domain occupies 937–1073 (STMKKHGRAL…SVQEMHAQIK (137 aa)). The allosteric domain stretch occupies residues 937 to 1073 (STMKKHGRAL…SVQEMHAQIK (137 aa)).

It belongs to the CarB family. Composed of two chains; the small (or glutamine) chain promotes the hydrolysis of glutamine to ammonia, which is used by the large (or ammonia) chain to synthesize carbamoyl phosphate. Tetramer of heterodimers (alpha,beta)4. Requires Mg(2+) as cofactor. The cofactor is Mn(2+).

The enzyme catalyses hydrogencarbonate + L-glutamine + 2 ATP + H2O = carbamoyl phosphate + L-glutamate + 2 ADP + phosphate + 2 H(+). It catalyses the reaction hydrogencarbonate + NH4(+) + 2 ATP = carbamoyl phosphate + 2 ADP + phosphate + 2 H(+). The protein operates within amino-acid biosynthesis; L-arginine biosynthesis; carbamoyl phosphate from bicarbonate: step 1/1. It participates in pyrimidine metabolism; UMP biosynthesis via de novo pathway; (S)-dihydroorotate from bicarbonate: step 1/3. In terms of biological role, large subunit of the glutamine-dependent carbamoyl phosphate synthetase (CPSase). CPSase catalyzes the formation of carbamoyl phosphate from the ammonia moiety of glutamine, carbonate, and phosphate donated by ATP, constituting the first step of 2 biosynthetic pathways, one leading to arginine and/or urea and the other to pyrimidine nucleotides. The large subunit (synthetase) binds the substrates ammonia (free or transferred from glutamine from the small subunit), hydrogencarbonate and ATP and carries out an ATP-coupled ligase reaction, activating hydrogencarbonate by forming carboxy phosphate which reacts with ammonia to form carbamoyl phosphate. This Escherichia coli O157:H7 protein is Carbamoyl phosphate synthase large chain.